A 38-amino-acid polypeptide reads, in one-letter code: uncharacterized protein (38 aa).

This is an uncharacterized protein from Acidianus two-tailed virus (ATV).